The primary structure comprises 225 residues: Fibroblast growth factor 11 (225 aa).

The tract at residues 1-28 (MAALASSLIRQKREVREPGGSRPVSAQR) is disordered.

The protein belongs to the heparin-binding growth factors family. Brain and eye, and in a segmental pattern of the embryonic body wall. In adult olfactory bulb, hippocampus and most concentrated in Purkinje cell layer of the cerebellum.

The protein localises to the nucleus. Functionally, probably involved in nervous system development and function. This is Fibroblast growth factor 11 (Fgf11) from Mus musculus (Mouse).